We begin with the raw amino-acid sequence, 313 residues long: Pyrimidine-specific ribonucleoside hydrolase RihB (313 aa).

The active-site Proton acceptor is the D11. The Ca(2+) site is built by D11, D16, and V124. Residues Q227 and H239 each coordinate substrate. Ca(2+) is bound at residue D240.

This sequence belongs to the IUNH family. RihB subfamily. As to quaternary structure, homotetramer. Ca(2+) serves as cofactor.

It carries out the reaction a pyrimidine ribonucleoside + H2O = a pyrimidine nucleobase + D-ribose. In terms of biological role, hydrolyzes cytidine or uridine to ribose and cytosine or uracil, respectively. Has a clear preference for cytidine over uridine. Strictly specific for ribonucleosides. The protein is Pyrimidine-specific ribonucleoside hydrolase RihB of Escherichia coli O9:H4 (strain HS).